The sequence spans 764 residues: Ergosteryl-beta-glucosidase (764 aa).

Residue E515 is the Nucleophile of the active site. Positions 588-629 are disordered; it reads HDTRAKTPTPEPSPASTVASVSTSTSKSGSSQPPSFIKPDNH. Residue T594 is modified to Phosphothreonine. Low complexity predominate over residues 601 to 622; the sequence is PASTVASVSTSTSKSGSSQPPS.

This sequence belongs to the glycosyl hydrolase 5 (cellulase A) family.

It localises to the cytoplasm. Its subcellular location is the cytosol. The protein resides in the vacuole membrane. The enzyme catalyses ergosteryl 3-beta-D-glucoside + H2O = ergosterol + D-glucose. Its function is as follows. Ergosteryl beta-glucosidase involved in the ergosteryl beta-glucoside (EG) catabolic pathway and vacuole formation via hydrolysis of EG to generate glucose. Is also able to hydrolyze cholesteryl beta-glucoside and sitosteryl beta-glucoside to generate glucose; and C6-7-nitro-2,1,3-benzoxadiazole (NBD)-GlcCer to generate C6-NBD-ceramide (Cer). This chain is Ergosteryl-beta-glucosidase, found in Saccharomyces cerevisiae (strain ATCC 204508 / S288c) (Baker's yeast).